The chain runs to 294 residues: MSSDTKYKYAVVRIPETSVVDFFSLIVAKGYSDVSFVASLSQCNLRDDPNDDQPTTSSNSVKESINDDESNSENNKLSPPRRQSNPHSSLPAISSSTVKNEPTDSWTPSALSNDPTPDLLSATVPAELLTNLFAKTKSTEPKPQQLFGFQASGVDFDLSNNEWHENLRLPNGNGTEKYHPYGGNSKNDSPLQTRMKGWQREYIKEVIKDSHYPTEEELRDIEQKCDLSRKQILRFIAKRLTNPNRKPRVNHHDEKRKEQEERDSLADPDDDMINDNEAVTNLHHILNSLQETTA.

2 disordered regions span residues 43 to 119 (CNLR…TPDL) and 167 to 191 (LRLPNGNGTEKYHPYGGNSKNDSPL). Polar residues-rich tracts occupy residues 52 to 63 (DQPTTSSNSVKE) and 81 to 115 (RRQSNPHSSLPAISSSTVKNEPTDSWTPSALSNDP). The segment at residues 192-232 (QTRMKGWQREYIKEVIKDSHYPTEEELRDIEQKCDLSRKQI) is a DNA-binding region (homeobox; atypical). Residues 238–274 (KRLTNPNRKPRVNHHDEKRKEQEERDSLADPDDDMIN) are disordered. The span at 250–265 (NHHDEKRKEQEERDSL) shows a compositional bias: basic and acidic residues.

Expressed widely, including gut, the amphid sheath glial cells, and head and tail neurons including AWC, ASE, and ASH. Expressed in AWC (ON) olfactory neuron but not AWC (OFF).

It is found in the nucleus. Transcriptional regulator which binds DNA consensus sequence 5'-CCTTAAC-3'. Plays a role in establishing and maintaining asymmetric cell fates in chemosensory AWC neurons during larval neuronal development. This is achieved by repressing the expression of multiple AWC (OFF) genes, including srsx-3 and hlh-11 in the AWC (ON) neuron. Activates expression of sox-2 in the AWC (ON) neuron. The chain is Transcription factor nsy-7 from Caenorhabditis elegans.